Here is a 303-residue protein sequence, read N- to C-terminus: Protoporphyrin uptake protein 1 (303 aa).

Topologically, residues 1–18 (MSTTDSGFVLYHYTPSKA) are extracellular. A helical transmembrane segment spans residues 19–39 (AAIVFVVLFIIMTVIFAVQTL). Residues 40 to 76 (YAARKSSKALKNNPFESSDDKVDSLEDAEYKQLKITP) are Cytoplasmic-facing. The chain crosses the membrane as a helical span at residues 77 to 97 (TVFAFIPFFTGCIMEAVGYIG). At 98 to 111 (RALSSSNPERTTPY) the chain is on the extracellular side. Residues 112 to 132 (IIQSVLLLVAPALIAATIYMI) form a helical membrane-spanning segment. At 133–154 (FGRLLHVMRCQSLILISARFGT) the chain is on the cytoplasmic side. The helical transmembrane segment at 155 to 175 (TFFVVGDVFSFFLQAAGGGLM) threads the bilayer. Over 176–183 (SKAGSTKT) the chain is Extracellular. The helical transmembrane segment at 184–204 (GSGLITAGLFVQVIFFGFFII) threads the bilayer. The Cytoplasmic segment spans residues 205 to 226 (NEIRFTVNVKRRCLFYEDISRK). The helical transmembrane segment at 227–247 (WIFVNATLLLSSMLILLRSIV) threads the bilayer. The Extracellular portion of the chain corresponds to 248-264 (RIVEFIQGFNGYIISHE). A helical transmembrane segment spans residues 265-285 (YFIYVFDAVPMLLVIIAFSVG). Residues 286-303 (SFFGNVFDVIKECQTLSN) are Cytoplasmic-facing.

The protein belongs to the lipid-translocating exporter (LTE) (TC 9.A.26.1) family. Post-translationally, N-glycosylated.

Its subcellular location is the cell membrane. Its function is as follows. Involved in inducible protoporphyrin IX influx and heme efflux. This chain is Protoporphyrin uptake protein 1 (PUG1), found in Saccharomyces cerevisiae (strain ATCC 204508 / S288c) (Baker's yeast).